Here is a 940-residue protein sequence, read N- to C-terminus: UvrABC system protein A (940 aa).

An ATP-binding site is contributed by 31–38 (GLSGSGKS). The C4-type zinc-finger motif lies at 253 to 280 (CPICGYSMRELEPRLFSFNNPAGACPTC). 2 consecutive ABC transporter domains span residues 310-587 (WDRR…PESL) and 607-937 (ANPE…RFLK). 640–647 (GVSGSGKS) is a binding site for ATP. The segment at 740–766 (CEACQGDGVIKVEMHFLPDIYVPCDQC) adopts a C4-type zinc-finger fold.

The protein belongs to the ABC transporter superfamily. UvrA family. As to quaternary structure, forms a heterotetramer with UvrB during the search for lesions. Interacts with TRCF (Mfd). UvrB and TRCF binding to UvrA could be mutually exclusive.

It is found in the cytoplasm. Functionally, the UvrABC repair system catalyzes the recognition and processing of DNA lesions. UvrA is an ATPase and a DNA-binding protein. A damage recognition complex composed of 2 UvrA and 2 UvrB subunits scans DNA for abnormalities. When the presence of a lesion has been verified by UvrB, the UvrA molecules dissociate. This chain is UvrABC system protein A, found in Escherichia coli (strain K12).